The chain runs to 311 residues: Olfactory receptor 10G4 (311 aa).

The Extracellular portion of the chain corresponds to 1–23; sequence MSNASLVTAFILTGLPHAPGLDA. Asparagine 3 carries an N-linked (GlcNAc...) asparagine glycan. Residues 24-44 form a helical membrane-spanning segment; it reads LLFGIFLVVYVLTVLGNLLIL. At 45–52 the chain is on the cytoplasmic side; the sequence is LVIRVDSH. The chain crosses the membrane as a helical span at residues 53–73; that stretch reads LHTPMYYFLTNLSFIDMWFST. The Extracellular portion of the chain corresponds to 74 to 98; it reads VTVPKMLMTLVSPSGRAISFHSCVA. The cysteines at positions 96 and 188 are disulfide-linked. The chain crosses the membrane as a helical span at residues 99 to 119; sequence QLYFFHFLGSTECFLYTVMSY. Residues 120–138 are Cytoplasmic-facing; the sequence is DRYLAISYPLRYTSMMSGS. A helical membrane pass occupies residues 139-159; that stretch reads RCALLATGTWLSGSLHSAVQT. Residues 160 to 196 are Extracellular-facing; sequence ILTFHLPYCGPNQIQHYFCDAPPILKLACADTSANVM. The chain crosses the membrane as a helical span at residues 197–216; the sequence is VIFVDIGIVASGCFVLIVLS. At 217–236 the chain is on the cytoplasmic side; that stretch reads YVSIVCSILRIRTSDGRRRA. Residues 237–257 traverse the membrane as a helical segment; that stretch reads FQTCASHCIVVLCFFVPCVVI. Topologically, residues 258–268 are extracellular; it reads YLRPGSMDAMD. The helical transmembrane segment at 269–289 threads the bilayer; the sequence is GVVAIFYTVLTPLLNPVVYTL. Over 290–311 the chain is Cytoplasmic; sequence RNKEVKKAVLKLRDKVAHPQRK.

It belongs to the G-protein coupled receptor 1 family.

Its subcellular location is the cell membrane. Odorant receptor. In Homo sapiens (Human), this protein is Olfactory receptor 10G4 (OR10G4).